The chain runs to 3587 residues: Tyrocidine synthase 2 (3587 aa).

A domain 1 (Proline-activating) region spans residues 466–1045; the sequence is AATMHELFSR…IQALAAYVEG (580 aa). 2 consecutive Carrier domains span residues 972 to 1047 and 2007 to 2082; these read APTT…EGGE and APAT…EHSE. 2 positions are modified to O-(pantetheine 4'-phosphoryl)serine: serine 1007 and serine 2042. The segment at 1522–2081 is domain 2 (Phenylalanine-activating); sequence EQTAVVFGDK…RDLARLIEHS (560 aa). A domain 3 (D-phenylalanine-activating) region spans residues 2540–3122; sequence YRADQTIQQL…NSRESEQGVV (583 aa). The segment at 3017–3040 is disordered; it reads NDKIDRKALPKPNQEENRTEQYAA. Over residues 3018-3035 the composition is skewed to basic and acidic residues; that stretch reads DKIDRKALPKPNQEENRT. The Carrier 3 domain maps to 3040–3114; the sequence is APQTELEQLL…EAALRVIPNS (75 aa). An O-(pantetheine 4'-phosphoryl)serine modification is found at serine 3075.

It belongs to the ATP-dependent AMP-binding enzyme family. As to quaternary structure, large multienzyme complex of TycA, TycB and TycC. The cofactor is pantetheine 4'-phosphate.

It carries out the reaction L-phenylalanine + ATP + H2O = D-phenylalanine + AMP + diphosphate + H(+). It participates in antibiotic biosynthesis; tyrocidine biosynthesis. Activates the second to fourth amino acids in tyrocidine (in tyrocidine A, Pro, Phe, and D-Phe) and epimerizes the last one. This Brevibacillus parabrevis protein is Tyrocidine synthase 2 (tycB).